Here is a 197-residue protein sequence, read N- to C-terminus: MIDSIVGIIQEVFSNYVILNYNNLYIKIFCNSTKFSEFLGKEKRVYVSLKFNENLSELECYGFLTREERELFLKLQKVTGVGSKLALQILSSIDFQELIVEIAKGNVAKLEKVKGIGKKTASRIILELKETLKKEFKVASTSGKEEKTYEKLEEISLALLSLGYDIDEVNQVLSSEDFSELSLEDGIKLALKKLSKI.

A domain I region spans residues 1 to 64 (MIDSIVGIIQ…LSELECYGFL (64 aa)). The tract at residues 65 to 143 (TREERELFLK…KEFKVASTSG (79 aa)) is domain II. Residues 144-152 (KEEKTYEKL) are flexible linker. Residues 152–197 (LEEISLALLSLGYDIDEVNQVLSSEDFSELSLEDGIKLALKKLSKI) are domain III.

Belongs to the RuvA family. In terms of assembly, homotetramer. Forms an RuvA(8)-RuvB(12)-Holliday junction (HJ) complex. HJ DNA is sandwiched between 2 RuvA tetramers; dsDNA enters through RuvA and exits via RuvB. An RuvB hexamer assembles on each DNA strand where it exits the tetramer. Each RuvB hexamer is contacted by two RuvA subunits (via domain III) on 2 adjacent RuvB subunits; this complex drives branch migration. In the full resolvosome a probable DNA-RuvA(4)-RuvB(12)-RuvC(2) complex forms which resolves the HJ.

Its subcellular location is the cytoplasm. In terms of biological role, the RuvA-RuvB-RuvC complex processes Holliday junction (HJ) DNA during genetic recombination and DNA repair, while the RuvA-RuvB complex plays an important role in the rescue of blocked DNA replication forks via replication fork reversal (RFR). RuvA specifically binds to HJ cruciform DNA, conferring on it an open structure. The RuvB hexamer acts as an ATP-dependent pump, pulling dsDNA into and through the RuvAB complex. HJ branch migration allows RuvC to scan DNA until it finds its consensus sequence, where it cleaves and resolves the cruciform DNA. In Caldicellulosiruptor bescii (strain ATCC BAA-1888 / DSM 6725 / KCTC 15123 / Z-1320) (Anaerocellum thermophilum), this protein is Holliday junction branch migration complex subunit RuvA.